The sequence spans 150 residues: 3-hydroxyacyl-[acyl-carrier-protein] dehydratase FabZ (150 aa).

H53 is a catalytic residue.

The protein belongs to the thioester dehydratase family. FabZ subfamily.

The protein resides in the cytoplasm. It catalyses the reaction a (3R)-hydroxyacyl-[ACP] = a (2E)-enoyl-[ACP] + H2O. Involved in unsaturated fatty acids biosynthesis. Catalyzes the dehydration of short chain beta-hydroxyacyl-ACPs and long chain saturated and unsaturated beta-hydroxyacyl-ACPs. The protein is 3-hydroxyacyl-[acyl-carrier-protein] dehydratase FabZ of Photorhabdus laumondii subsp. laumondii (strain DSM 15139 / CIP 105565 / TT01) (Photorhabdus luminescens subsp. laumondii).